We begin with the raw amino-acid sequence, 913 residues long: Epithelial discoidin domain-containing receptor 1 (913 aa).

Positions 1-18 are cleaved as a signal peptide; that stretch reads MGPEALSSLLLLLLVASG. Residues 21-417 are Extracellular-facing; the sequence is DMKGHFDPAK…VAKAEGSPTA (397 aa). The F5/8 type C domain maps to 31-185; the sequence is CRYALGMQDR…VCLRVELYGC (155 aa). Disulfide bonds link Cys-31-Cys-185 and Cys-74-Cys-177. The segment at 192 to 367 is DS-like domain; that stretch reads LSYTAPVGQT…LFSEISFISD (176 aa). Positions 211, 230, 233, 235, 253, and 255 each coordinate Ca(2+). N-linked (GlcNAc...) asparagine glycosylation is present at Asn-211. The N-linked (GlcNAc...) asparagine glycan is linked to Asn-260. Cys-303 and Cys-348 are oxidised to a cystine. Ca(2+)-binding residues include Ser-360 and Glu-361. Residues Asn-370 and Asn-394 are each glycosylated (N-linked (GlcNAc...) asparagine). A helical transmembrane segment spans residues 418-438; sequence ILIGCLVAIILLLLLIIALML. The Cytoplasmic portion of the chain corresponds to 439–913; sequence WRLHWRRLLS…FLAEDALNTV (475 aa). The segment at 470–499 is disordered; that stretch reads ILINNRPGPREPPPYQEPRPRGNPPHSAPC. Residues 479–496 show a composition bias toward pro residues; sequence REPPPYQEPRPRGNPPHS. Residues 481–484 carry the PPxY motif motif; it reads PPPY. Tyr-484, Tyr-513, and Tyr-520 each carry phosphotyrosine; by autocatalysis. Positions 610 to 905 constitute a Protein kinase domain; that stretch reads LRFKEKLGEG…PPFSQLHRFL (296 aa). 616 to 624 is an ATP binding site; it reads LGEGQFGEV. The residue at position 631 (Ser-631) is a Phosphoserine. ATP is bound at residue Lys-655. Tyr-740 carries the phosphotyrosine; by autocatalysis modification. Asp-766 (proton acceptor) is an active-site residue. Phosphotyrosine; by autocatalysis occurs at positions 792, 796, and 797.

Belongs to the protein kinase superfamily. Tyr protein kinase family. Insulin receptor subfamily. As to quaternary structure, homodimer. Interacts (via PPxY motif) with WWC1 (via WW domains) in a collagen-regulated manner. Forms a tripartite complex with WWC1 and PRKCZ, but predominantly in the absence of collagen. Interacts (tyrosine phosphorylated) with SHC1. Interacts with SRC. Interacts with MYH9. Interacts with CDH1. Interacts with PTPN11. Interacts with NCK2. Autophosphorylated in response to fibrillar collagen binding. In terms of processing, glycosylation of Asn-211, but apparently not of Asn-260 or Asn-394, prevents autophosphorylation from occurring in the absence of collagen. As to expression, detected in T-47D, MDA-MB-175 and HBL-100 breast carcinoma cells, A-431 epidermoid carcinoma cells, SW48 and SNU-C2B colon carcinoma cells and Hs 294T melanoma cells (at protein level). Expressed at low levels in most adult tissues and is highest in the brain, lung, placenta and kidney. Lower levels of expression are detected in melanocytes, heart, liver, skeletal muscle and pancreas. Abundant in breast carcinoma cell lines. In the colonic mucosa, expressed in epithelia but not in the connective tissue of the lamina propria. In the thyroid gland, expressed in the epithelium of the thyroid follicles. In pancreas, expressed in the islets of Langerhans cells, but not in the surrounding epithelial cells of the exocrine pancreas. In kidney, expressed in the epithelia of the distal tubules. Not expressed in connective tissue, endothelial cells, adipose tissue, muscle cells or cells of hematopoietic origin.

It localises to the cell membrane. Its subcellular location is the secreted. It catalyses the reaction L-tyrosyl-[protein] + ATP = O-phospho-L-tyrosyl-[protein] + ADP + H(+). Inhibited by the multi-targeted cancer drugs imatinib and ponatinib. Functionally, tyrosine kinase that functions as a cell surface receptor for fibrillar collagen and regulates cell attachment to the extracellular matrix, remodeling of the extracellular matrix, cell migration, differentiation, survival and cell proliferation. Collagen binding triggers a signaling pathway that involves SRC and leads to the activation of MAP kinases. Regulates remodeling of the extracellular matrix by up-regulation of the matrix metalloproteinases MMP2, MMP7 and MMP9, and thereby facilitates cell migration and wound healing. Required for normal blastocyst implantation during pregnancy, for normal mammary gland differentiation and normal lactation. Required for normal ear morphology and normal hearing. Promotes smooth muscle cell migration, and thereby contributes to arterial wound healing. Also plays a role in tumor cell invasion. Phosphorylates PTPN11. This is Epithelial discoidin domain-containing receptor 1 (DDR1) from Homo sapiens (Human).